Consider the following 209-residue polypeptide: Uracil phosphoribosyltransferase (209 aa).

5-phospho-alpha-D-ribose 1-diphosphate-binding positions include Arg-79, Arg-104, and 131-139 (DPMLATGGS). Uracil-binding positions include Ile-194 and 199 to 201 (GDA). Position 200 (Asp-200) interacts with 5-phospho-alpha-D-ribose 1-diphosphate.

It belongs to the UPRTase family. The cofactor is Mg(2+).

It catalyses the reaction UMP + diphosphate = 5-phospho-alpha-D-ribose 1-diphosphate + uracil. Its pathway is pyrimidine metabolism; UMP biosynthesis via salvage pathway; UMP from uracil: step 1/1. Its activity is regulated as follows. Allosterically activated by GTP. Catalyzes the conversion of uracil and 5-phospho-alpha-D-ribose 1-diphosphate (PRPP) to UMP and diphosphate. This chain is Uracil phosphoribosyltransferase, found in Lysinibacillus sphaericus (strain C3-41).